Here is a 337-residue protein sequence, read N- to C-terminus: Protein RecA (337 aa).

66-73 (GPESSGKT) contacts ATP.

This sequence belongs to the RecA family.

It localises to the cytoplasm. Functionally, can catalyze the hydrolysis of ATP in the presence of single-stranded DNA, the ATP-dependent uptake of single-stranded DNA by duplex DNA, and the ATP-dependent hybridization of homologous single-stranded DNAs. It interacts with LexA causing its activation and leading to its autocatalytic cleavage. This chain is Protein RecA, found in Mesomycoplasma hyopneumoniae (strain 232) (Mycoplasma hyopneumoniae).